A 242-amino-acid chain; its full sequence is Transcriptional regulatory protein GltR (242 aa).

Positions 7-123 (SILLVDDDQE…ELLARIKALL (117 aa)) constitute a Response regulatory domain. Position 56 is a 4-aspartylphosphate (Asp-56). The segment at residues 134–234 (GDVLAFEDWR…VRGSGYLLAA (101 aa)) is a DNA-binding region (ompR/PhoB-type).

Post-translationally, phosphorylated by GtrS.

Its subcellular location is the cytoplasm. With respect to regulation, phosphorylation of GltR induces its dissociation from DNA leading to transcriptional activation. In terms of biological role, member of the two-component regulatory system GtrS/GltR involved in the regulation of glucose metabolism and transport, as well as regulation of the exotoxin A gene expression. GltR controls the transcription of genes involved in glucose metabolism (glk and edd/gap-1) and transport (oprB) as well as the expression of toxA that encodes exotoxin A, the primary virulence factor. Acts as a repressor that is released from its target operators upon phosphorylation. Its function is as follows. Contributes to modulation of the type III secretion system (T3SS) in response to host cells via the regulation of the OprB transport system. The protein is Transcriptional regulatory protein GltR of Pseudomonas aeruginosa (strain ATCC 15692 / DSM 22644 / CIP 104116 / JCM 14847 / LMG 12228 / 1C / PRS 101 / PAO1).